We begin with the raw amino-acid sequence, 319 residues long: Tetrahydromethanopterin S-methyltransferase subunit H (319 aa).

Belongs to the MtrH family. As to quaternary structure, the complex is composed of 8 subunits; MtrA, MtrB, MtrC, MtrD, MtrE, MtrF, MtrG and MtrH.

It carries out the reaction 5-methyl-5,6,7,8-tetrahydromethanopterin + coenzyme M + 2 Na(+)(in) = 5,6,7,8-tetrahydromethanopterin + methyl-coenzyme M + 2 Na(+)(out). Its pathway is one-carbon metabolism; methanogenesis from CO(2); methyl-coenzyme M from 5,10-methylene-5,6,7,8-tetrahydromethanopterin: step 2/2. Functionally, part of a complex that catalyzes the formation of methyl-coenzyme M and tetrahydromethanopterin from coenzyme M and methyl-tetrahydromethanopterin. This is an energy-conserving, sodium-ion translocating step. MtrH catalyzes the transfer of the methyl group from methyl-tetrahydromethanopterin to the corrinoid prosthetic group of MtrA. This chain is Tetrahydromethanopterin S-methyltransferase subunit H, found in Methanococcus maripaludis (strain C5 / ATCC BAA-1333).